Consider the following 204-residue polypeptide: Large ribosomal subunit protein uL4 (204 aa).

The disordered stretch occupies residues 52–76; sequence AEVRGGGKKPWAQKGGGRARAGSRR.

Belongs to the universal ribosomal protein uL4 family. As to quaternary structure, part of the 50S ribosomal subunit.

Its function is as follows. One of the primary rRNA binding proteins, this protein initially binds near the 5'-end of the 23S rRNA. It is important during the early stages of 50S assembly. It makes multiple contacts with different domains of the 23S rRNA in the assembled 50S subunit and ribosome. In terms of biological role, forms part of the polypeptide exit tunnel. The protein is Large ribosomal subunit protein uL4 of Sulfurimonas denitrificans (strain ATCC 33889 / DSM 1251) (Thiomicrospira denitrificans (strain ATCC 33889 / DSM 1251)).